The primary structure comprises 62 residues: Large ribosomal subunit protein uL29 (62 aa).

It belongs to the universal ribosomal protein uL29 family.

The chain is Large ribosomal subunit protein uL29 from Chromobacterium violaceum (strain ATCC 12472 / DSM 30191 / JCM 1249 / CCUG 213 / NBRC 12614 / NCIMB 9131 / NCTC 9757 / MK).